Consider the following 777-residue polypeptide: MNRIASYLRTYATEAERPMATDVQPSESDVERLLRQRNVGISAHIDSGKTTLTERVLYYTGRIKDIHEVRGRDEVGAKMDSMELEREKGITIQSAATYCNWKATPPTERSNMTGDAADESTVTTQKKHDYHINIIDTPGHVDFTIEVERALRVLDGAVLVLCAVSGVQSQTMTVDRQMRRYSVPRLSFINKMDRAGANPWRVVEQIRTKLRMPAAAMQVPIGAEDNFQGLVDLVRWKAVYNEGTKGNVVRESDDIPADVLELAREKRQELIEQLSDVDDEMAEIFIEEREPTIEELVAALRRATVACRFSPVFLGTAIKNKGVQALLDGMCAYLPNPMEVRAIANDTAVAKKIAAQANEEGHDVAAMQSSAQHGSEVQLVPATEAPLVGLAFKLEESRFGQLTYMRVYQGILRRGGIIFNSRTGKKVKVPRLVRMHADDMEDVQEIGPGEICAMFGVECSSGDTFTDGSTTLSMSAMFVPEPVISLSLTPEGKDTSVNFSRALNRFQKEDPTFRVHVDSESSETIISGMGELHLDIYVERMRREYNVPCTTGKPRVAFRETISQPAKFNYTHKKQTGGAGQFGRVIGYIEPMTVDEDTGKDTAFVNSVMGGNIPPSYIPACEKGFADGLEKGALAGYPVCGVRMVLEDGAAHSVDSSELAFRIAAHAAFREAFRAANPTILEPKMSVEVIAPVEFQGTVIGALNQRKGTIEDTEVREDDFTITAEVSLNDMFGFSSQLRGLTQGKGEFSMEYKKHEPVMPNVQADMEAAYKKSLEKK.

The tr-type G domain maps to 34–338 (LRQRNVGISA…GMCAYLPNPM (305 aa)). GTP-binding positions include 43–50 (AHIDSGKT), 136–140 (DTPGH), and 190–193 (NKMD).

This sequence belongs to the TRAFAC class translation factor GTPase superfamily. Classic translation factor GTPase family. EF-G/EF-2 subfamily.

The protein resides in the mitochondrion. It functions in the pathway protein biosynthesis; polypeptide chain elongation. Its function is as follows. Mitochondrial GTPase that catalyzes the GTP-dependent ribosomal translocation step during translation elongation. During this step, the ribosome changes from the pre-translocational (PRE) to the post-translocational (POST) state as the newly formed A-site-bound peptidyl-tRNA and P-site-bound deacylated tRNA move to the P and E sites, respectively. Catalyzes the coordinated movement of the two tRNA molecules, the mRNA and conformational changes in the ribosome. This chain is Elongation factor G, mitochondrial, found in Malassezia globosa (strain ATCC MYA-4612 / CBS 7966) (Dandruff-associated fungus).